The sequence spans 150 residues: Probable head completion/stabilization protein (150 aa).

The protein to phage P2 protein L.

The sequence is that of Probable head completion/stabilization protein from Haemophilus phage HP1 (strain HP1c1) (Bacteriophage HP1).